Here is a 103-residue protein sequence, read N- to C-terminus: Large ribosomal subunit protein bL21 (103 aa).

The protein belongs to the bacterial ribosomal protein bL21 family. In terms of assembly, part of the 50S ribosomal subunit. Contacts protein L20.

This protein binds to 23S rRNA in the presence of protein L20. This Thiobacillus denitrificans (strain ATCC 25259 / T1) protein is Large ribosomal subunit protein bL21.